The chain runs to 85 residues: Phosphocarrier protein HPr (85 aa).

Residues 1 to 85 (MYEKQVEITA…HLVALMDQLH (85 aa)) form the HPr domain. The active-site Pros-phosphohistidine intermediate is histidine 15.

Belongs to the HPr family.

It localises to the cytoplasm. General (non sugar-specific) component of the phosphoenolpyruvate-dependent sugar phosphotransferase system (sugar PTS). This major carbohydrate active-transport system catalyzes the phosphorylation of incoming sugar substrates concomitantly with their translocation across the cell membrane. The phosphoryl group from phosphoenolpyruvate (PEP) is transferred to the phosphoryl carrier protein HPr by enzyme I. Phospho-HPr then transfers it to the PTS EIIA domain. The sequence is that of Phosphocarrier protein HPr (ptsH) from Vibrio cholerae serotype O1 (strain ATCC 39315 / El Tor Inaba N16961).